Reading from the N-terminus, the 455-residue chain is Bifunctional protein GlmU (455 aa).

The pyrophosphorylase stretch occupies residues 1 to 226; that stretch reads MSLDIVILAA…AMEVQGANDR (226 aa). UDP-N-acetyl-alpha-D-glucosamine-binding positions include 8-11, Lys-22, Gln-73, 78-79, 99-101, Gly-136, Glu-151, Asn-166, and Asn-224; these read LAAG, GT, and YGD. Residue Asp-101 participates in Mg(2+) binding. Mg(2+) is bound at residue Asn-224. A linker region spans residues 227-247; that stretch reads RQLSELERHYQLREGRRLMAQ. The interval 248–455 is N-acetyltransferase; sequence GVTLRDPARF…WKRPEKIKKS (208 aa). Residues Arg-330 and Lys-348 each coordinate UDP-N-acetyl-alpha-D-glucosamine. The active-site Proton acceptor is the His-360. Positions 363 and 374 each coordinate UDP-N-acetyl-alpha-D-glucosamine. Acetyl-CoA-binding positions include Ala-377, 383–384, Ser-402, Ala-420, and Arg-437; that span reads NY.

In the N-terminal section; belongs to the N-acetylglucosamine-1-phosphate uridyltransferase family. It in the C-terminal section; belongs to the transferase hexapeptide repeat family. Homotrimer. The cofactor is Mg(2+).

It is found in the cytoplasm. The enzyme catalyses alpha-D-glucosamine 1-phosphate + acetyl-CoA = N-acetyl-alpha-D-glucosamine 1-phosphate + CoA + H(+). It carries out the reaction N-acetyl-alpha-D-glucosamine 1-phosphate + UTP + H(+) = UDP-N-acetyl-alpha-D-glucosamine + diphosphate. It functions in the pathway nucleotide-sugar biosynthesis; UDP-N-acetyl-alpha-D-glucosamine biosynthesis; N-acetyl-alpha-D-glucosamine 1-phosphate from alpha-D-glucosamine 6-phosphate (route II): step 2/2. The protein operates within nucleotide-sugar biosynthesis; UDP-N-acetyl-alpha-D-glucosamine biosynthesis; UDP-N-acetyl-alpha-D-glucosamine from N-acetyl-alpha-D-glucosamine 1-phosphate: step 1/1. It participates in bacterial outer membrane biogenesis; LPS lipid A biosynthesis. Catalyzes the last two sequential reactions in the de novo biosynthetic pathway for UDP-N-acetylglucosamine (UDP-GlcNAc). The C-terminal domain catalyzes the transfer of acetyl group from acetyl coenzyme A to glucosamine-1-phosphate (GlcN-1-P) to produce N-acetylglucosamine-1-phosphate (GlcNAc-1-P), which is converted into UDP-GlcNAc by the transfer of uridine 5-monophosphate (from uridine 5-triphosphate), a reaction catalyzed by the N-terminal domain. The protein is Bifunctional protein GlmU of Pseudomonas putida (strain ATCC 47054 / DSM 6125 / CFBP 8728 / NCIMB 11950 / KT2440).